We begin with the raw amino-acid sequence, 406 residues long: Synaptic vesicle membrane protein VAT-1 homolog (406 aa).

The disordered stretch occupies residues 1 to 57 (MSAEREAAEAATVAAATEAGAETGTGAGEGAPSQPPTVEVASDPQPPPAPEASASAS). N-acetylserine is present on Ser-2. At Ser-2 the chain carries Phosphoserine. Low complexity predominate over residues 9–22 (EAATVAAATEAGAE). Ser-33 and Ser-42 each carry phosphoserine.

Belongs to the zinc-containing alcohol dehydrogenase family. Quinone oxidoreductase subfamily.

It localises to the cytoplasm. The protein resides in the mitochondrion outer membrane. In terms of biological role, plays a part in calcium-regulated keratinocyte activation in epidermal repair mechanisms. Has no effect on cell proliferation. Possesses ATPase activity. Negatively regulates mitochondrial fusion in cooperation with mitofusin proteins (MFN1-2). The chain is Synaptic vesicle membrane protein VAT-1 homolog (Vat1) from Mus musculus (Mouse).